A 208-amino-acid polypeptide reads, in one-letter code: Effector protein MavE (208 aa).

The NPxY eukaryotic motif signature appears at 77-80; it reads NPRY. A helical transmembrane segment spans residues 184-204; the sequence is VLFPFVAATVAVAATAASVLF.

In terms of assembly, homotrimer.

Its subcellular location is the secreted. The protein localises to the host vacuole. It localises to the host pathogen-containing vacuole. The protein resides in the host pathogen-containing vacuole membrane. Virulence effector that is indispensable for endoplasmic reticulum (ER)-mediated remodeling of the Legionella pneumophila-containing vacuole (LCV) and lysosomal evasion. Essential for intracellular replication in human monocyte-derived macrophages (hMDMs) and amoebae, as well as for intrapulmonary proliferation in mice. The chain is Effector protein MavE from Legionella pneumophila subsp. pneumophila (strain Philadelphia 1 / ATCC 33152 / DSM 7513).